The primary structure comprises 417 residues: Serine hydroxymethyltransferase (417 aa).

Residues Leu-121 and 125–127 each bind (6S)-5,6,7,8-tetrahydrofolate; that span reads GHL. An N6-(pyridoxal phosphate)lysine modification is found at Lys-229. 355–357 is a binding site for (6S)-5,6,7,8-tetrahydrofolate; sequence SPF.

Belongs to the SHMT family. In terms of assembly, homodimer. It depends on pyridoxal 5'-phosphate as a cofactor.

The protein resides in the cytoplasm. It catalyses the reaction (6R)-5,10-methylene-5,6,7,8-tetrahydrofolate + glycine + H2O = (6S)-5,6,7,8-tetrahydrofolate + L-serine. It participates in one-carbon metabolism; tetrahydrofolate interconversion. Its pathway is amino-acid biosynthesis; glycine biosynthesis; glycine from L-serine: step 1/1. Functionally, catalyzes the reversible interconversion of serine and glycine with tetrahydrofolate (THF) serving as the one-carbon carrier. This reaction serves as the major source of one-carbon groups required for the biosynthesis of purines, thymidylate, methionine, and other important biomolecules. Also exhibits THF-independent aldolase activity toward beta-hydroxyamino acids, producing glycine and aldehydes, via a retro-aldol mechanism. The chain is Serine hydroxymethyltransferase from Proteus mirabilis (strain HI4320).